The primary structure comprises 392 residues: Phosphoglycerate kinase (392 aa).

Substrate contacts are provided by residues 21–23 (DMN), Arg-36, 59–62 (HLGR), Arg-114, and Arg-147. ATP is bound by residues Lys-198, Glu-320, and 346-349 (GGDT).

Belongs to the phosphoglycerate kinase family. In terms of assembly, monomer.

It localises to the cytoplasm. The enzyme catalyses (2R)-3-phosphoglycerate + ATP = (2R)-3-phospho-glyceroyl phosphate + ADP. It participates in carbohydrate degradation; glycolysis; pyruvate from D-glyceraldehyde 3-phosphate: step 2/5. This Neisseria meningitidis serogroup B (strain ATCC BAA-335 / MC58) protein is Phosphoglycerate kinase (pgk).